Reading from the N-terminus, the 179-residue chain is Large ribosomal subunit protein uL5 (179 aa).

This sequence belongs to the universal ribosomal protein uL5 family. As to quaternary structure, part of the 50S ribosomal subunit; part of the 5S rRNA/L5/L18/L25 subcomplex. Contacts the 5S rRNA and the P site tRNA. Forms a bridge to the 30S subunit in the 70S ribosome.

Functionally, this is one of the proteins that bind and probably mediate the attachment of the 5S RNA into the large ribosomal subunit, where it forms part of the central protuberance. In the 70S ribosome it contacts protein S13 of the 30S subunit (bridge B1b), connecting the 2 subunits; this bridge is implicated in subunit movement. Contacts the P site tRNA; the 5S rRNA and some of its associated proteins might help stabilize positioning of ribosome-bound tRNAs. This Vibrio parahaemolyticus serotype O3:K6 (strain RIMD 2210633) protein is Large ribosomal subunit protein uL5.